A 184-amino-acid chain; its full sequence is Zinc metalloproteinase-disintegrin-like ammodytagin (184 aa).

In terms of domain architecture, Peptidase M12B spans 1–90; that stretch reads KSAAXVTLDL…CPAKCIDNKP (90 aa). Aspartate 20 is a Ca(2+) binding site. Histidine 64 provides a ligand contact to Zn(2+). Glutamate 65 is a catalytic residue. Zn(2+) is bound by residues histidine 68 and histidine 74. 5 residues coordinate Ca(2+): asparagine 88, valine 100, asparagine 103, phenylalanine 105, and glutamate 107. Residues 98–124 form the Disintegrin domain; sequence PAVCGNYFVELTPGSQCADGVCCDQCR. Disulfide bonds link cysteine 114-cysteine 120 and cysteine 165-cysteine 177.

This sequence belongs to the venom metalloproteinase (M12B) family. P-III subfamily. P-IIIc sub-subfamily. Heterodimer; disulfide-linked. Requires Zn(2+) as cofactor. The N-terminus is blocked. In terms of processing, N-glycosylated. Expressed by the venom gland.

The protein resides in the secreted. With respect to regulation, inhibited by EDTA, DTT and zinc ions. Partially inhibited by L-cysteine. Not inhibited by 2-propanol or PMSF. Activity is enhanced by calcium or magnesium ions. In terms of biological role, snake venom zinc metalloprotease that has fibrinogenolytic and hemorrhagic activities in mouse and rats. Hydrolyzes the Aalpha-chain (FGA) and more slowly the Bbeta-chain of fibrinogen (FGB), without affecting the gamma-chain. Its hemorrhagic activity results of its involvement in cleavage of basal membrane components (nidogen and fibronectin but not laminin) and depletion of fibrinogen, prothrombin (F2) and factor X (F10) in blood circulation. Also possess potent azocaseinolytic activity and cleaves insulin B-chain, hydrolyzing it at positions Gln(4)-His(5), His(10)-Leu(11) and Tyr(16)-Leu(17). The chain is Zinc metalloproteinase-disintegrin-like ammodytagin from Vipera ammodytes ammodytes (Western sand viper).